Here is a 202-residue protein sequence, read N- to C-terminus: 7-cyano-7-deazaguanine synthase 1 (202 aa).

7–17 (MSGGLDSSSAA) is an ATP binding site. Residues cysteine 166, cysteine 174, cysteine 177, and cysteine 180 each contribute to the Zn(2+) site.

This sequence belongs to the QueC family. Requires Zn(2+) as cofactor.

It carries out the reaction 7-carboxy-7-deazaguanine + NH4(+) + ATP = 7-cyano-7-deazaguanine + ADP + phosphate + H2O + H(+). Its pathway is purine metabolism; 7-cyano-7-deazaguanine biosynthesis. In terms of biological role, catalyzes the ATP-dependent conversion of 7-carboxy-7-deazaguanine (CDG) to 7-cyano-7-deazaguanine (preQ(0)). The protein is 7-cyano-7-deazaguanine synthase 1 (queC1) of Sulfurisphaera tokodaii (strain DSM 16993 / JCM 10545 / NBRC 100140 / 7) (Sulfolobus tokodaii).